The chain runs to 290 residues: Pyridoxal kinase PdxY (290 aa).

Substrate-binding positions include serine 12 and 47 to 48 (TQ). Residues aspartate 114, glutamate 151, lysine 184, and 211–214 (RPLL) each bind ATP. A substrate-binding site is contributed by aspartate 225.

It belongs to the pyridoxine kinase family. PdxY subfamily. Homodimer. Mg(2+) serves as cofactor.

It catalyses the reaction pyridoxal + ATP = pyridoxal 5'-phosphate + ADP + H(+). It participates in cofactor metabolism; pyridoxal 5'-phosphate salvage; pyridoxal 5'-phosphate from pyridoxal: step 1/1. Functionally, pyridoxal kinase involved in the salvage pathway of pyridoxal 5'-phosphate (PLP). Catalyzes the phosphorylation of pyridoxal to PLP. The polypeptide is Pyridoxal kinase PdxY (Pseudomonas fluorescens (strain Pf0-1)).